A 97-amino-acid polypeptide reads, in one-letter code: Secreted Ly-6/uPAR domain-containing protein 2 (97 aa).

The signal sequence occupies residues 1–22; sequence MQLGTGLLLAAVLSLQLAAAEA. Cystine bridges form between Cys25–Cys47, Cys28–Cys34, Cys40–Cys68, Cys72–Cys88, and Cys89–Cys94. The 71-residue stretch at 25-95 folds into the UPAR/Ly6 domain; the sequence is CHQCTGFGGC…IACCQTSLCN (71 aa).

Interacts with CHRNA3, CHRNA4, CHRNA5, CHRNA7, CHRNB2 and CHRNB4. Interacts with CHRM1 and CHRM3 probably in an allosteric manner. As to expression, expressed at highest levels in cervix and esophagus, followed by adult and fetal skin. Expressed at lower levels in brain, lung, stomach, small intestine, colon, rectum, uterus, and thymus. Not detected in spleen nor bone marrow. Up-regulated 3-fold in psoriatic lesional skin. In the epidermis, predominantly produced by keratinocytes of the suprabasal epidermal compartment (at protein level). In attached gingiva, produced at highest levels by basal cells located in the lowermost epithelial layers (at protein level). Detected in serum (at protein level).

Its subcellular location is the secreted. Functionally, binds and may modulate the functional properties of nicotinic and muscarinic acetylcholine receptors. May regulate keratinocytes proliferation, differentiation and apoptosis. In vitro moderately inhibits ACh-evoked currents of alpha-3:beta-2-containing nAChRs and strongly these of alpha-4:beta-2-containing nAChRs, modulates alpha-7-containing nAChRs, and inhibits nicotine-induced signaling probably implicating alpha-3:beta-4-containing nAChRs. Proposed to act on alpha-3:beta-2 and alpha-7 nAChRs in an orthosteric, and on mAChRs, such as CHRM1 and CHRM3, in an allosteric manner. The protein is Secreted Ly-6/uPAR domain-containing protein 2 of Homo sapiens (Human).